Here is a 277-residue protein sequence, read N- to C-terminus: Probable ketoamine kinase HMPREF0351_12196 (277 aa).

Residue 84-86 (EWI) participates in ATP binding. D186 serves as the catalytic Proton acceptor.

It belongs to the fructosamine kinase family.

It carries out the reaction N(6)-(D-ribulosyl)-L-lysine + ATP = N(6)-(3-O-phospho-D-ribulosyl)-L-lysine + ADP + H(+). The catalysed reaction is N-(D-ribulosyl)-cadaverine + ATP = N-(3-O-phospho-D-ribulosyl)-cadaverine + ADP + H(+). It catalyses the reaction N(6)-(D-erythrulosyl)-L-lysine + ATP = N(6)-(3-O-phospho-D-erythrulosyl)-L-lysine + ADP + H(+). The enzyme catalyses N-(D-erythrulosyl)-cadaverine + ATP = N-(3-O-phospho-D-erythrulosyl)-cadaverine + ADP + H(+). It carries out the reaction N(6)-D-ribulosyl-L-lysyl-[protein] + ATP = N(6)-(3-O-phospho-D-ribulosyl)-L-lysyl-[protein] + ADP + H(+). The catalysed reaction is N(6)-(D-erythrulosyl)-L-lysyl-[protein] + ATP = N(6)-(3-O-phospho-D-erythrulosyl)-L-lysyl-[protein] + ADP + H(+). Ketoamine kinase that phosphorylates ketoamines, such as erythruloselysine, erythrulosecadaverine, ribuloselysine and ribulosecadaverine, on the third carbon of the sugar moiety to generate ketoamine 3-phosphate. Has higher activity on free lysine (erythruloselysine and ribuloselysine), than on ribuloselysine and erythruloselysine residues on glycated proteins. The protein is Probable ketoamine kinase HMPREF0351_12196 of Enterococcus faecium (strain ATCC BAA-472 / TX0016 / DO).